The following is a 299-amino-acid chain: Methionyl-tRNA formyltransferase (299 aa).

Position 109–112 (109–112) interacts with (6S)-5,6,7,8-tetrahydrofolate; that stretch reads SLLP.

Belongs to the Fmt family.

It catalyses the reaction L-methionyl-tRNA(fMet) + (6R)-10-formyltetrahydrofolate = N-formyl-L-methionyl-tRNA(fMet) + (6S)-5,6,7,8-tetrahydrofolate + H(+). Functionally, attaches a formyl group to the free amino group of methionyl-tRNA(fMet). The formyl group appears to play a dual role in the initiator identity of N-formylmethionyl-tRNA by promoting its recognition by IF2 and preventing the misappropriation of this tRNA by the elongation apparatus. This is Methionyl-tRNA formyltransferase from Wolbachia pipientis subsp. Culex pipiens (strain wPip).